The following is a 283-amino-acid chain: Polyamine aminopropyltransferase (283 aa).

Residues 2-238 form the PABS domain; sequence ELWYTEEWTE…GHWLFGFASK (237 aa). Gln31 lines the S-methyl-5'-thioadenosine pocket. Positions 62 and 86 each coordinate spermidine. Residues Glu106 and 137 to 138 contribute to the S-methyl-5'-thioadenosine site; that span reads DG. Asp156 acts as the Proton acceptor in catalysis. Residue 156–159 participates in spermidine binding; the sequence is DSTD. Pro163 contributes to the S-methyl-5'-thioadenosine binding site.

Belongs to the spermidine/spermine synthase family. Homodimer or homotetramer.

Its subcellular location is the cytoplasm. The catalysed reaction is S-adenosyl 3-(methylsulfanyl)propylamine + putrescine = S-methyl-5'-thioadenosine + spermidine + H(+). Its pathway is amine and polyamine biosynthesis; spermidine biosynthesis; spermidine from putrescine: step 1/1. In terms of biological role, catalyzes the irreversible transfer of a propylamine group from the amino donor S-adenosylmethioninamine (decarboxy-AdoMet) to putrescine (1,4-diaminobutane) to yield spermidine. In Clostridioides difficile (strain 630) (Peptoclostridium difficile), this protein is Polyamine aminopropyltransferase.